A 29-amino-acid chain; its full sequence is Dermaseptin-S5 (29 aa).

This sequence belongs to the frog skin active peptide (FSAP) family. Dermaseptin subfamily. In terms of tissue distribution, expressed by the skin glands.

The protein resides in the secreted. Its function is as follows. Potent antimicrobial peptide with activity against bacteria and protozoa. Also has activity against fungi. Probably acts by disturbing membrane functions with its amphipathic structure. This Phyllomedusa sauvagei (Sauvage's leaf frog) protein is Dermaseptin-S5.